The sequence spans 622 residues: Low affinity potassium transport system protein Kup (622 aa).

12 consecutive transmembrane segments (helical) span residues 9-29, 49-69, 103-123, 137-157, 165-185, 213-233, 247-267, 276-296, 337-357, 363-383, 396-416, and 419-439; these read LPAI…TSPL, VFGF…IKYL, VIMG…TPAI, PQLD…LFMI, VGKL…VLGL, VSFI…ALYA, WFTV…ALLL, PFFL…AALA, IYIP…IVSF, LAAA…ILST, FVAL…SANL, and LLSG…IMTT.

It belongs to the HAK/KUP transporter (TC 2.A.72) family.

The protein resides in the cell inner membrane. It carries out the reaction K(+)(in) + H(+)(in) = K(+)(out) + H(+)(out). Functionally, responsible for the low-affinity transport of potassium into the cell. Likely operates as a K(+):H(+) symporter. The polypeptide is Low affinity potassium transport system protein Kup (Salmonella typhi).